The chain runs to 210 residues: 7-methyl-GTP pyrophosphatase (210 aa).

The active-site Proton acceptor is the Asp79.

This sequence belongs to the Maf family. YceF subfamily. A divalent metal cation serves as cofactor.

The protein localises to the cytoplasm. The enzyme catalyses N(7)-methyl-GTP + H2O = N(7)-methyl-GMP + diphosphate + H(+). Functionally, nucleoside triphosphate pyrophosphatase that hydrolyzes 7-methyl-GTP (m(7)GTP). May have a dual role in cell division arrest and in preventing the incorporation of modified nucleotides into cellular nucleic acids. The protein is 7-methyl-GTP pyrophosphatase of Burkholderia orbicola (strain AU 1054).